A 50-amino-acid chain; its full sequence is DFTPVCTTELGRLAPEFAKRVVFIFGPDKKLKLSILYPATTGRNFDEILR.

The Thioredoxin domain occupies 1-50 (DFTPVCTTELGRLAPEFAKRVVFIFGPDKKLKLSILYPATTGRNFDEILR). Residue threonine 3 is modified to Phosphothreonine. Cysteine 6 (cysteine sulfenic acid (-SOH) intermediate; for peroxidase activity) is an active-site residue. Lysine 19 bears the N6-acetyllysine mark. The For phospholipase activity role is filled by aspartate 28.

This sequence belongs to the peroxiredoxin family. Prx6 subfamily. As to quaternary structure, homodimer. Interacts with GSTP1; mediates PRDX6 glutathionylation and regeneration. Interacts with APEX1. Interacts with STH. May interact with FAM168B. May interact with HTR2A. In terms of processing, irreversibly inactivated by overoxidation of Cys-6 to sulfinic acid (Cys-SO(2)H) and sulfonic acid (Cys-SO(3)H) forms upon oxidative stress. Post-translationally, phosphorylation at Thr-177 by MAP kinases increases the phospholipase activity of the enzyme. The phosphorylated form exhibits a greater lysophosphatidylcholine acyltransferase activity compared to the non-phosphorylated form.

It localises to the cytoplasm. The protein localises to the lysosome. It carries out the reaction a hydroperoxide + 2 glutathione = an alcohol + glutathione disulfide + H2O. The enzyme catalyses a 1,2-diacyl-sn-glycero-3-phosphocholine + H2O = a 1-acyl-sn-glycero-3-phosphocholine + a fatty acid + H(+). It catalyses the reaction a 1-acyl-sn-glycero-3-phosphocholine + an acyl-CoA = a 1,2-diacyl-sn-glycero-3-phosphocholine + CoA. The catalysed reaction is 1-hexadecanoyl-sn-glycero-3-phosphocholine + hexadecanoyl-CoA = 1,2-dihexadecanoyl-sn-glycero-3-phosphocholine + CoA. It carries out the reaction 1,2-dihexadecanoyl-sn-glycero-3-phosphocholine + H2O = 1-hexadecanoyl-sn-glycero-3-phosphocholine + hexadecanoate + H(+). In terms of biological role, thiol-specific peroxidase that catalyzes the reduction of hydrogen peroxide and organic hydroperoxides to water and alcohols, respectively. Can reduce H(2)O(2) and short chain organic, fatty acid, and phospholipid hydroperoxides. Also has phospholipase activity, and can therefore either reduce the oxidized sn-2 fatty acyl group of phospholipids (peroxidase activity) or hydrolyze the sn-2 ester bond of phospholipids (phospholipase activity). These activities are dependent on binding to phospholipids at acidic pH and to oxidized phospholipds at cytosolic pH. Plays a role in cell protection against oxidative stress by detoxifying peroxides and in phospholipid homeostasis. Exhibits acyl-CoA-dependent lysophospholipid acyltransferase which mediates the conversion of lysophosphatidylcholine (1-acyl-sn-glycero-3-phosphocholine or LPC) into phosphatidylcholine (1,2-diacyl-sn-glycero-3-phosphocholine or PC). Shows a clear preference for LPC as the lysophospholipid and for palmitoyl CoA as the fatty acyl substrate. In Mesocricetus auratus (Golden hamster), this protein is Peroxiredoxin-6.